A 528-amino-acid chain; its full sequence is Calcium-dependent protein kinase 13 (528 aa).

A lipid anchor (N-myristoyl glycine) is attached at Gly-2. Basic and acidic residues predominate over residues 17-32; sequence KSNYSGHDHARKDAAG. Residues 17-37 are disordered; the sequence is KSNYSGHDHARKDAAGGKKSA. A Phosphoserine modification is found at Ser-43. In terms of domain architecture, Protein kinase spans 54–312; the sequence is YLLDRELGRG…AKQVLEHPWI (259 aa). ATP-binding positions include 60-68 and Lys-83; that span reads LGRGEFGVT. Residue Asp-178 is the Proton acceptor of the active site. Ser-218 carries the post-translational modification Phosphoserine. The tract at residues 318 to 348 is autoinhibitory domain; sequence APNVPLGDVVKSRLKQFSVMNRFKRKALRVI. EF-hand domains follow at residues 355–390, 391–426, 427–462, and 463–498; these read EEVE…FSTQ, LAES…LQKV, ANDE…DGGD, and DCVD…GTDW. Ca(2+)-binding residues include Asp-368, Asp-370, Asp-372, Glu-379, Asp-404, Thr-410, Glu-415, Asp-440, Asp-442, Asn-444, Tyr-446, Glu-451, Asp-476, Asp-478, Asp-480, and Arg-482. Phosphoserine is present on Ser-484. Residue Glu-487 coordinates Ca(2+). A Phosphoserine modification is found at Ser-522.

It belongs to the protein kinase superfamily. Ser/Thr protein kinase family. CDPK subfamily.

It localises to the cell membrane. It catalyses the reaction L-seryl-[protein] + ATP = O-phospho-L-seryl-[protein] + ADP + H(+). The enzyme catalyses L-threonyl-[protein] + ATP = O-phospho-L-threonyl-[protein] + ADP + H(+). Its activity is regulated as follows. Activated by calcium. Autophosphorylation may play an important role in the regulation of the kinase activity. Its function is as follows. May play a role in signal transduction pathways that involve calcium as a second messenger. The protein is Calcium-dependent protein kinase 13 (CPK13) of Arabidopsis thaliana (Mouse-ear cress).